Reading from the N-terminus, the 86-residue chain is Defensin-like protein 97 (86 aa).

Residues 1–27 (MGSLRVSTFAVAVVVCLSILLMSPTDG) form the signal peptide. 4 cysteine pairs are disulfide-bonded: cysteine 31/cysteine 74, cysteine 38/cysteine 60, cysteine 44/cysteine 71, and cysteine 48/cysteine 73.

The protein belongs to the DEFL family.

It localises to the secreted. The polypeptide is Defensin-like protein 97 (LCR85) (Arabidopsis thaliana (Mouse-ear cress)).